The following is a 371-amino-acid chain: Chaperone protein DnaJ (371 aa).

Residues Asp-6–Gly-71 form the J domain. Residues Gly-104 to Ser-123 form a disordered region. A CR-type zinc finger spans residues Gly-139–His-217. Positions 152, 155, 169, 172, 191, 194, 205, and 208 each coordinate Zn(2+). 4 CXXCXGXG motif repeats span residues Cys-152–Gly-159, Cys-169–Gly-176, Cys-191–Gly-198, and Cys-205–Gly-212.

The protein belongs to the DnaJ family. Homodimer. Zn(2+) serves as cofactor.

The protein localises to the cytoplasm. In terms of biological role, participates actively in the response to hyperosmotic and heat shock by preventing the aggregation of stress-denatured proteins and by disaggregating proteins, also in an autonomous, DnaK-independent fashion. Unfolded proteins bind initially to DnaJ; upon interaction with the DnaJ-bound protein, DnaK hydrolyzes its bound ATP, resulting in the formation of a stable complex. GrpE releases ADP from DnaK; ATP binding to DnaK triggers the release of the substrate protein, thus completing the reaction cycle. Several rounds of ATP-dependent interactions between DnaJ, DnaK and GrpE are required for fully efficient folding. Also involved, together with DnaK and GrpE, in the DNA replication of plasmids through activation of initiation proteins. The sequence is that of Chaperone protein DnaJ from Bdellovibrio bacteriovorus (strain ATCC 15356 / DSM 50701 / NCIMB 9529 / HD100).